Reading from the N-terminus, the 103-residue chain is MAAVALNVSTLKPLGDRVLVKIAQQDEKTAGGIFLPDTAKEKPQVGEVVAVGPGKRNDEGKLIPMELKAGDKVLYSKYAGTEVKLGSDEYVLLAERDILAIVQ.

Belongs to the GroES chaperonin family. As to quaternary structure, heptamer of 7 subunits arranged in a ring. Interacts with the chaperonin GroEL.

It is found in the cytoplasm. In terms of biological role, together with the chaperonin GroEL, plays an essential role in assisting protein folding. The GroEL-GroES system forms a nano-cage that allows encapsulation of the non-native substrate proteins and provides a physical environment optimized to promote and accelerate protein folding. GroES binds to the apical surface of the GroEL ring, thereby capping the opening of the GroEL channel. In Synechococcus sp. (strain JA-2-3B'a(2-13)) (Cyanobacteria bacterium Yellowstone B-Prime), this protein is Co-chaperonin GroES.